A 336-amino-acid polypeptide reads, in one-letter code: Anthranilate phosphoribosyltransferase (336 aa).

Residues glycine 78, 81-82 (GD), threonine 86, 88-91 (NVST), 106-114 (KHGNYSVSS), and serine 118 contribute to the 5-phospho-alpha-D-ribose 1-diphosphate site. Glycine 78 provides a ligand contact to anthranilate. Serine 90 contributes to the Mg(2+) binding site. Residue asparagine 109 coordinates anthranilate. Residue arginine 164 coordinates anthranilate. Residues aspartate 222 and glutamate 223 each coordinate Mg(2+).

The protein belongs to the anthranilate phosphoribosyltransferase family. Homodimer. Mg(2+) serves as cofactor.

It carries out the reaction N-(5-phospho-beta-D-ribosyl)anthranilate + diphosphate = 5-phospho-alpha-D-ribose 1-diphosphate + anthranilate. It participates in amino-acid biosynthesis; L-tryptophan biosynthesis; L-tryptophan from chorismate: step 2/5. Catalyzes the transfer of the phosphoribosyl group of 5-phosphorylribose-1-pyrophosphate (PRPP) to anthranilate to yield N-(5'-phosphoribosyl)-anthranilate (PRA). In Halobacterium salinarum (strain ATCC 29341 / DSM 671 / R1), this protein is Anthranilate phosphoribosyltransferase.